A 1159-amino-acid chain; its full sequence is Syntaxin-binding protein 5-like (1159 aa).

The tract at residues 1–37 (MKKFRKVLDGLTTSSPVNPGGSPGCGSAAGTPSAAPT) is disordered. Residues 25–37 (CGSAAGTPSAAPT) are compositionally biased toward low complexity. 10 WD repeats span residues 67–108 (TALA…CHSQ), 115–154 (VLQM…SLKF), 159–195 (ITFC…GYVI), 214–248 (HLSD…DFRI), 254–286 (IHSV…TAKP), 307–350 (PILK…KAIT), 358–392 (IVDF…VVDL), 414–491 (TCTA…YKLK), 519–628 (QMIS…ELVV), and 642–703 (TCLD…STSG). Disordered stretches follow at residues 571–604 (SDTE…SVRD) and 690–770 (LTRS…KAQS). Composition is skewed to polar residues over residues 699–713 (QSTS…NQVS) and 721–739 (SPTS…SQPC). WD repeat units lie at residues 808 to 865 (VTTL…TGTV), 874 to 946 (RFGF…QACL), 951 to 995 (ITES…LDVS), and 1009 to 1032 (CFTN…TYSQ). In terms of domain architecture, v-SNARE coiled-coil homology spans 1094 to 1154 (GIEGMKAAAG…HELMLKCKDK (61 aa)).

It belongs to the WD repeat L(2)GL family.

It localises to the cytoplasm. It is found in the cell membrane. The protein resides in the membrane. Functionally, may play a role in vesicle trafficking and exocytosis. The chain is Syntaxin-binding protein 5-like (stxbp5l) from Danio rerio (Zebrafish).